A 470-amino-acid chain; its full sequence is MSQAYSSSQRVSSYRRTFGGAPGFPLGSPLSSPVFPRAGFGSKGSSSSVTSRVYQVSRTSGGAGGLGSLRASRLGTTRTPSSYGAGELLDFSLADAVNQEFLTTRTNEKVELQELNDRFANYIEKVRFLEQQNAALAAEVNRLKGREPTRVAELYEEELRELRRQVEVLTNQRARVDVERDNLLDDLQRLKAKLQEEIQLKEEAENNLAAFRADVDAATLARIDLERRIESLNEEIAFLKKVHEEEIRELQAQLQEQQVQVEMDMSKPDLTAALRDIRAQYETIAAKNISEAEEWYKSKVSDLTQAANKNNDALRQAKQEMMEYRHQIQSYTCEIDALKGTNDSLMRQMRELEDRFASEASGYQDNIARLEEEIRHLKDEMARHLREYQDLLNVKMALDVEIATYRKLLEGEESRINLPIQTYSALNFRETSPEQRGSEVHTKKTVMIKTIETRDGEVVSEATQQQHEVL.

Positions 2-108 (SQAYSSSQRV…QEFLTTRTNE (107 aa)) are head. Residue Ser-7 is modified to Phosphoserine; by CDK1. The residue at position 12 (Ser-12) is a Phosphoserine; by AURKB. Arg-16 carries the post-translational modification Omega-N-methylarginine. A Phosphothreonine; by AURKB and ROCK1 modification is found at Thr-17. Ser-28 carries the post-translational modification Phosphoserine; by CDK1. At Ser-31 the chain carries Phosphoserine. Residue Ser-32 is modified to Phosphoserine; by CDK1. The residue at position 37 (Arg-37) is an Asymmetric dimethylarginine; alternate. Residue Arg-37 is modified to Omega-N-methylarginine; alternate. At Ser-45 the chain carries Phosphoserine. Arg-58 carries the post-translational modification ADP-ribosylarginine. Position 60 is a phosphoserine; by AURKB (Ser-60). The residue at position 68 (Ser-68) is a Phosphoserine. Arg-70 bears the Omega-N-methylarginine mark. A phosphothreonine; by ROCK1 mark is found at Thr-76 and Thr-77. Phosphoserine is present on Ser-81. In terms of domain architecture, IF rod spans 108-416 (EKVELQELND…KLLEGEESRI (309 aa)). The interval 109–141 (KVELQELNDRFANYIEKVRFLEQQNAALAAEVN) is coil 1A. Residues 142–151 (RLKGREPTRV) form a linker 1 region. The segment at 152–252 (AELYEEELRE…HEEEIRELQA (101 aa)) is coil 1B. The interval 253 to 268 (QLQEQQVQVEMDMSKP) is linker 12. The interaction with NEB stretch occupies residues 268–415 (PDLTAALRDI…RKLLEGEESR (148 aa)). The coil 2A stretch occupies residues 269–287 (DLTAALRDIRAQYETIAAK). Residues 288–295 (NISEAEEW) are linker 2. 4 positions are modified to phosphoserine: Ser-290, Ser-358, Ser-361, and Ser-424. The tract at residues 296–412 (YKSKVSDLTQ…ATYRKLLEGE (117 aa)) is coil 2B. A tail region spans residues 413 to 470 (ESRINLPIQTYSALNFRETSPEQRGSEVHTKKTVMIKTIETRDGEVVSEATQQQHEVL). The interaction with CRYAB stretch occupies residues 438-453 (SEVHTKKTVMIKTIET).

It belongs to the intermediate filament family. As to quaternary structure, homomer. Interacts with DST. Interacts with MTM1. Interacts with EPPK1; interaction is dependent of higher-order structure of intermediate filament. Interacts with CRYAB. Interacts with NEB (via nebulin repeats 160-164). Interacts (via rod region) with NEBL (via nebulin repeats 1-5). Interacts with ASB2 isoform 1; the interaction targets DES for proteasomal degradation. Interacts with PLEC isoform 1C. Interacts with PKP1. Interacts with FLII. ADP-ribosylation prevents ability to form intermediate filaments. In terms of processing, phosphorylation at Ser-7, Ser-28 and Ser-32 by CDK1, phosphorylation at Ser-60 by AURKB and phosphorylation at Thr-76 by ROCK1 contribute to efficient separation of desmin intermediate filaments during mitosis. Post-translationally, ubiquitination by a SCF-like complex containing ASB2 isoform 1 leads to proteasomal degradation.

The protein resides in the cytoplasm. Its subcellular location is the myofibril. It is found in the sarcomere. It localises to the z line. The protein localises to the cell membrane. The protein resides in the sarcolemma. Its subcellular location is the nucleus. It is found in the cell tip. It localises to the nucleus envelope. In terms of biological role, muscle-specific type III intermediate filament essential for proper muscular structure and function. Plays a crucial role in maintaining the structure of sarcomeres, inter-connecting the Z-disks and forming the myofibrils, linking them not only to the sarcolemmal cytoskeleton, but also to the nucleus and mitochondria, thus providing strength for the muscle fiber during activity. In adult striated muscle they form a fibrous network connecting myofibrils to each other and to the plasma membrane from the periphery of the Z-line structures. May act as a sarcomeric microtubule-anchoring protein: specifically associates with detyrosinated tubulin-alpha chains, leading to buckled microtubules and mechanical resistance to contraction. Required for nuclear membrane integrity, via anchoring at the cell tip and nuclear envelope, resulting in maintenance of microtubule-derived intracellular mechanical forces. Contributes to the transcriptional regulation of the NKX2-5 gene in cardiac progenitor cells during a short period of cardiomyogenesis and in cardiac side population stem cells in the adult. Plays a role in maintaining an optimal conformation of nebulette (NEB) on heart muscle sarcomeres to bind and recruit cardiac alpha-actin. The polypeptide is Desmin (DES) (Homo sapiens (Human)).